The chain runs to 242 residues: Pyridoxine 5'-phosphate synthase (242 aa).

Asn-7 lines the 3-amino-2-oxopropyl phosphate pocket. A 1-deoxy-D-xylulose 5-phosphate-binding site is contributed by 9–10 (DH). A 3-amino-2-oxopropyl phosphate-binding site is contributed by Arg-18. The active-site Proton acceptor is His-43. 1-deoxy-D-xylulose 5-phosphate-binding residues include Arg-45 and His-50. Glu-70 serves as the catalytic Proton acceptor. Thr-100 lines the 1-deoxy-D-xylulose 5-phosphate pocket. His-190 acts as the Proton donor in catalysis. Residues Gly-191 and 212-213 (GH) contribute to the 3-amino-2-oxopropyl phosphate site.

The protein belongs to the PNP synthase family. Homooctamer; tetramer of dimers.

It localises to the cytoplasm. It catalyses the reaction 3-amino-2-oxopropyl phosphate + 1-deoxy-D-xylulose 5-phosphate = pyridoxine 5'-phosphate + phosphate + 2 H2O + H(+). Its pathway is cofactor biosynthesis; pyridoxine 5'-phosphate biosynthesis; pyridoxine 5'-phosphate from D-erythrose 4-phosphate: step 5/5. Functionally, catalyzes the complicated ring closure reaction between the two acyclic compounds 1-deoxy-D-xylulose-5-phosphate (DXP) and 3-amino-2-oxopropyl phosphate (1-amino-acetone-3-phosphate or AAP) to form pyridoxine 5'-phosphate (PNP) and inorganic phosphate. The polypeptide is Pyridoxine 5'-phosphate synthase (Thermodesulfovibrio yellowstonii (strain ATCC 51303 / DSM 11347 / YP87)).